The following is a 150-amino-acid chain: Large ribosomal subunit protein bL9 (150 aa).

This sequence belongs to the bacterial ribosomal protein bL9 family.

In terms of biological role, binds to the 23S rRNA. This Verminephrobacter eiseniae (strain EF01-2) protein is Large ribosomal subunit protein bL9.